The primary structure comprises 641 residues: YAP1-binding protein 2 (641 aa).

The protein belongs to the YBP1 family.

The protein resides in the cytoplasm. In terms of biological role, involved in oxidative stress response and redox homeostasis. Required for hydrogen peroxide-induced activation of YAP1. Acts in a parallele pathway to YBP1. This chain is YAP1-binding protein 2, found in Saccharomyces cerevisiae (strain ATCC 204508 / S288c) (Baker's yeast).